A 264-amino-acid polypeptide reads, in one-letter code: COP9 signalosome complex subunit 7b (264 aa).

Ala2 bears the N-acetylalanine mark. The 158-residue stretch at 2–159 folds into the PCI domain; sequence AGEQKPSSNL…QLLEVDFCIG (158 aa). Positions 194–237 form a coiled coil; it reads RANQYKENHHRTQQQVEAEVSNIKKTLKATASSSAQEMEQQLAE. Over residues 223–232 the composition is skewed to polar residues; sequence TASSSAQEME. The segment at 223–264 is disordered; sequence TASSSAQEMEQQLAERECPPHTEQRQPTKKMSKVKGLVSSRH. Residues 235-248 show a composition bias toward basic and acidic residues; that stretch reads LAERECPPHTEQRQ.

This sequence belongs to the CSN7/EIF3M family. CSN7 subfamily. In terms of assembly, component of the CSN complex, composed of COPS1/GPS1, COPS2, COPS3, COPS4, COPS5, COPS6, COPS7 (COPS7A or COPS7B) and COPS8 and COPS9. In the complex, it probably interacts directly with COPS1, COPS2, COPS4, COPS5, COPS6 and COPS8. Interacts with EIF3S6.

It is found in the cytoplasm. The protein localises to the nucleus. Its function is as follows. Component of the COP9 signalosome complex (CSN), a complex involved in various cellular and developmental processes. The CSN complex is an essential regulator of the ubiquitin (Ubl) conjugation pathway by mediating the deneddylation of the cullin subunits of SCF-type E3 ligase complexes, leading to decrease the Ubl ligase activity of SCF-type complexes such as SCF, CSA or DDB2. The complex is also involved in phosphorylation of p53/TP53, JUN, I-kappa-B-alpha/NFKBIA, ITPK1 and IRF8/ICSBP, possibly via its association with CK2 and PKD kinases. CSN-dependent phosphorylation of TP53 and JUN promotes and protects degradation by the Ubl system, respectively. This Mus musculus (Mouse) protein is COP9 signalosome complex subunit 7b (Cops7b).